A 430-amino-acid polypeptide reads, in one-letter code: Adenylosuccinate synthetase (430 aa).

GTP contacts are provided by residues 13–19 (GDEGKGK) and 41–43 (GHT). D14 functions as the Proton acceptor in the catalytic mechanism. Mg(2+)-binding residues include D14 and G41. IMP contacts are provided by residues 14 to 17 (DEGK), 39 to 42 (NAGH), T130, R144, Q225, T240, and R304. H42 (proton donor) is an active-site residue. 300–306 (ATTGRAR) contacts substrate. Residues R306, 332-334 (KLD), and 414-416 (STG) contribute to the GTP site.

It belongs to the adenylosuccinate synthetase family. In terms of assembly, homodimer. It depends on Mg(2+) as a cofactor.

The protein resides in the cytoplasm. It catalyses the reaction IMP + L-aspartate + GTP = N(6)-(1,2-dicarboxyethyl)-AMP + GDP + phosphate + 2 H(+). It participates in purine metabolism; AMP biosynthesis via de novo pathway; AMP from IMP: step 1/2. In terms of biological role, plays an important role in the de novo pathway of purine nucleotide biosynthesis. Catalyzes the first committed step in the biosynthesis of AMP from IMP. This is Adenylosuccinate synthetase from Pseudomonas syringae pv. tomato (strain ATCC BAA-871 / DC3000).